A 478-amino-acid polypeptide reads, in one-letter code: Receptor-interacting serine/threonine-protein kinase 3 (478 aa).

Serine 2 is modified (phosphoserine). A Protein kinase domain is found at 22-290; sequence LENLGFVGKG…CESKTNNVYI (269 aa). ATP contacts are provided by residues 28 to 36 and lysine 51; that span reads VGKGGFGAV. Aspartate 143 functions as the Proton acceptor in the catalytic mechanism. At serine 165 the chain carries Phosphoserine. Residue threonine 185 is modified to Phosphothreonine. Serine 201 carries the post-translational modification Phosphoserine; by autocatalysis. Threonine 228 carries the phosphothreonine modification. A Phosphoserine; by autocatalysis modification is found at serine 229. At threonine 254 the chain carries Phosphothreonine. Serine 301 and serine 323 each carry phosphoserine. The disordered stretch occupies residues 311 to 330; sequence RSSDTKLSARESSQKGTEVD. Positions 313–330 are enriched in basic and acidic residues; sequence SDTKLSARESSQKGTEVD. The residue at position 335 (threonine 335) is a Phosphothreonine. Phosphoserine is present on residues serine 350, serine 369, and serine 380. The interval 362 to 429 is disordered; it reads ERRGKEASFG…RNSNPWYTWN (68 aa). Positions 376–385 are enriched in polar residues; the sequence is AGTSSDTLAG. Position 392 is a phosphothreonine (threonine 392). A compositionally biased stretch (polar residues) spans 413–429; sequence QRNQGDGRNSNPWYTWN. The RIP homotypic interaction motif (RHIM) motif lies at 437 to 461; it reads LQSIVLNNCSEVQIGQHNCMSVQPR. At arginine 474 the chain carries Omega-N-methylarginine.

Belongs to the protein kinase superfamily. TKL Ser/Thr protein kinase family. As to quaternary structure, interacts (via RIP homotypic interaction motif) with RIPK1 (via RIP homotypic interaction motif); this interaction induces RIPK1 phosphorylation and formation of a RIPK1-RIPK3 necrosis-inducing complex. Interacts with MLKL; the interaction is direct and triggers necroptosis. Interacts with ZBP1 (via RIP homotypic interaction motif); interaction with ZBP1 activates RIPK3, triggering necroptosis. Upon TNF-induced necrosis, the RIPK1-RIPK3 dimer further interacts with PGAM5 and MLKL; the formation of this complex leads to PGAM5 phosphorylation and increase in PGAM5 phosphatase activity. Binds TRAF2 and is recruited to the TNFR-1 signaling complex. Interacts with PYGL, GLUL and GLUD1; these interactions result in activation of these metabolic enzymes. Interacts with BIRC2/c-IAP1, BIRC3/c-IAP2 and XIAP/BIRC4. Interacts with ARHGEF2. Interacts with PELI1 (via atypical FHA domain); the phosphorylated form at Thr-185 binds preferentially to PELI1. Interacts with BUB1B, TRAF2 and STUB1. Interacts with CASP6. Component of the AIM2 PANoptosome complex, a multiprotein complex that drives inflammatory cell death (PANoptosis). Post-translationally, RIPK1 and RIPK3 undergo reciprocal auto- and trans-phosphorylation. Autophosphorylated following interaction with ZBP1. Phosphorylation of Ser-201 plays a role in the necroptotic function of RIPK3. Autophosphorylates at Thr-228 and Ser-229 following activation by ZBP1: phosphorylation at these sites is a hallmark of necroptosis and is required for binding MLKL. Phosphorylation at Thr-185 is important for its kinase activity, interaction with PELI1 and for its ability to mediate TNF-induced necroptosis. In terms of processing, polyubiquitinated with 'Lys-48' and 'Lys-63'-linked chains by BIRC2/c-IAP1 and BIRC3/c-IAP2, leading to activation of NF-kappa-B. Ubiquitinated by STUB1 leading to its subsequent proteasome-dependent degradation.

It is found in the cytoplasm. Its subcellular location is the cytosol. The protein resides in the nucleus. The enzyme catalyses L-seryl-[protein] + ATP = O-phospho-L-seryl-[protein] + ADP + H(+). It catalyses the reaction L-threonyl-[protein] + ATP = O-phospho-L-threonyl-[protein] + ADP + H(+). Activity is stimulated by ZBP1, which senses double-stranded Z-RNA structures. RIPK3-dependent necroptosis is inhibited by RIPK1: RIPK1 prevents the ZBP1-induced activation of RIPK3 via FADD-mediated recruitment of CASP8, which cleaves RIPK1 and limits TNF-induced necroptosis. Functionally, serine/threonine-protein kinase that activates necroptosis and apoptosis, two parallel forms of cell death. Necroptosis, a programmed cell death process in response to death-inducing TNF-alpha family members, is triggered by RIPK3 following activation by ZBP1. Activated RIPK3 forms a necrosis-inducing complex and mediates phosphorylation of MLKL, promoting MLKL localization to the plasma membrane and execution of programmed necrosis characterized by calcium influx and plasma membrane damage. In addition to TNF-induced necroptosis, necroptosis can also take place in the nucleus in response to orthomyxoviruses infection: following ZBP1 activation, which senses double-stranded Z-RNA structures, nuclear RIPK3 catalyzes phosphorylation and activation of MLKL, promoting disruption of the nuclear envelope and leakage of cellular DNA into the cytosol. Also regulates apoptosis: apoptosis depends on RIPK1, FADD and CASP8, and is independent of MLKL and RIPK3 kinase activity. Phosphorylates RIPK1: RIPK1 and RIPK3 undergo reciprocal auto- and trans-phosphorylation. In some cell types, also able to restrict viral replication by promoting cell death-independent responses. In response to flavivirus infection in neurons, promotes a cell death-independent pathway that restricts viral replication: together with ZBP1, promotes a death-independent transcriptional program that modifies the cellular metabolism via up-regulation expression of the enzyme ACOD1/IRG1 and production of the metabolite itaconate. Itaconate inhibits the activity of succinate dehydrogenase, generating a metabolic state in neurons that suppresses replication of viral genomes. RIPK3 binds to and enhances the activity of three metabolic enzymes: GLUL, GLUD1, and PYGL. These metabolic enzymes may eventually stimulate the tricarboxylic acid cycle and oxidative phosphorylation, which could result in enhanced ROS production. The polypeptide is Receptor-interacting serine/threonine-protein kinase 3 (Rattus norvegicus (Rat)).